Reading from the N-terminus, the 252-residue chain is Probable transcriptional regulatory protein RT0442 (252 aa).

Residues 1–22 form a disordered region; that stretch reads MSGHSKFKNIQHRKGAQDKKKS.

This sequence belongs to the TACO1 family.

The protein localises to the cytoplasm. The chain is Probable transcriptional regulatory protein RT0442 from Rickettsia typhi (strain ATCC VR-144 / Wilmington).